A 449-amino-acid polypeptide reads, in one-letter code: Tubulin beta-8 chain (449 aa).

GTP-binding residues include glutamine 11, glutamate 69, serine 138, glycine 142, threonine 143, glycine 144, asparagine 204, and asparagine 226. Glutamate 69 lines the Mg(2+) pocket. Positions 428 to 449 (ATADEEEGYEYEEDEVEVQEEQ) are disordered. The segment covering 429 to 449 (TADEEEGYEYEEDEVEVQEEQ) has biased composition (acidic residues).

This sequence belongs to the tubulin family. In terms of assembly, dimer of alpha and beta chains. A typical microtubule is a hollow water-filled tube with an outer diameter of 25 nm and an inner diameter of 15 nM. Alpha-beta heterodimers associate head-to-tail to form protofilaments running lengthwise along the microtubule wall with the beta-tubulin subunit facing the microtubule plus end conferring a structural polarity. Microtubules usually have 13 protofilaments but different protofilament numbers can be found in some organisms and specialized cells. Requires Mg(2+) as cofactor.

Its subcellular location is the cytoplasm. It localises to the cytoskeleton. In terms of biological role, tubulin is the major constituent of microtubules, a cylinder consisting of laterally associated linear protofilaments composed of alpha- and beta-tubulin heterodimers. Microtubules grow by the addition of GTP-tubulin dimers to the microtubule end, where a stabilizing cap forms. Below the cap, tubulin dimers are in GDP-bound state, owing to GTPase activity of alpha-tubulin. The protein is Tubulin beta-8 chain (TUBB8) of Arabidopsis thaliana (Mouse-ear cress).